Consider the following 69-residue polypeptide: Conopeptide Y-Pl1 (69 aa).

Positions 1–20 (MSKLGVVLFVFLLLLPLAAP) are cleaved as a signal peptide. Positions 21–69 (QPVGDQPADQPADRNAEARARFLHPFQYYTLYRYLTRFLHRYPIYYIRY) are excised as a propeptide.

The protein belongs to the conotoxin M superfamily. Conopeptide Y family. Expressed by the venom duct.

The protein localises to the secreted. Its function is as follows. Tyrosine-rich conopeptide that targets several channels/receptors that are expressed in Xenopus oocytes. These targets are the voltage-gated potassium channels Kv1.6/KCNA6 (IC(50) is 170 nM) and Kv1.2/KCNA2 (IC(50) is 2.0 uM), Nav1.2/SCN2A (30% of inhibition), and N-methyl-D-aspartate (NMDA) receptor (GRIN1/GRIN2A/GRIN3B and GRIN1/GRIN2B/GRIN3B) (15% of inhibition). In vivo, causes the marine worm N.virens to move very slowly in contrast to control worms, and causes seizures (at 5 nmol) and death (20 nmol) to mice when intracranially injected. The chain is Conopeptide Y-Pl1 from Conus planorbis (Planorbis cone).